Here is a 497-residue protein sequence, read N- to C-terminus: MNSNDNQRVIVIGAGLGGLSAAISLATAGFSVQLIEKNDKVGGKLNIMTKDGFTFDLGPSILTMPHIFEALFTGAGKNMADYVQIQKVEPHWRNFFEDGSVIDLCEDAETQRRELDKLGPGTYAQFQRFLDYSKNLCTETEAGYFAKGLDGFWDLLKFYGPLRSLLSFDVFRSMDQGVRRFISDPKLVEILNYFIKYVGSSPYDAPALMNLLPYIQYHYGLWYVKGGMYGMAQAMEKLAVELGVEIRLDAEVSEIQKQDGRACAVKLANGDVLPADIVVSNMEVIPAMEKLLRSPASELKKMQRFEPSCSGLVLHLGVDRLYPQLAHHNFFYSDHPREHFDAVFKSHRLSDDPTIYLVAPCKTDPAQAPAGCEIIKILPHIPHLDPDKLLTAEDYSALRERVLVKLERMGLTDLRQHIVTEEYWTPLDIQAKYYSNQGSIYGVVADRFKNLGFKAPQRSSELSNLYFVGGSVNPGGGMPMVTLSGQLVRDKIVADLQ.

It belongs to the carotenoid/retinoid oxidoreductase family. FAD is required as a cofactor.

It catalyses the reaction all-trans-4,4'-diapolycopene + 4 AH2 + 4 O2 = all-trans-4,4'-diapolycopene-4,4'-dial + 4 A + 6 H2O. It carries out the reaction all-trans-4,4'-diaponeurosporene + 2 AH2 + 2 O2 = 4,4'-diaponeurosporenal + 2 A + 3 H2O. It functions in the pathway carotenoid biosynthesis. Involved in the biosynthesis of C30 carotenoids. Catalyzes the oxidation of the terminal methyl side groups of 4,4'-diapolycopene to yield 4,4'-diapolycopen-4,4'-dial via the aldehyde intermediate 4,4'-diapolycopen-al. Also able to catalyze the oxidation of the terminal methyl side group of 4,4'-diaponeurosporene to form 4,4'-diaponeurosporen-4-al. It has moderate to low activity on the C40 substrates neurosporene and lycopene, and has no detectable activity on zeta-carotene or beta-carotene. The protein is 4,4'-diapolycopene oxygenase of Methylomonas sp.